Here is a 339-residue protein sequence, read N- to C-terminus: SVP1-like protein 2 (339 aa).

WD repeat units follow at residues 177–217 and 222–261; these read AHAN…LVRE and LDRT…ENKR.

The protein belongs to the WD repeat PROPPIN family.

It localises to the vacuole membrane. Its subcellular location is the cytoplasmic vesicle membrane. Its function is as follows. Involved in mitochondrial or peroxisomal functions and amino acid signaling pathways. The chain is SVP1-like protein 2 (HSV2) from Kluyveromyces lactis (strain ATCC 8585 / CBS 2359 / DSM 70799 / NBRC 1267 / NRRL Y-1140 / WM37) (Yeast).